We begin with the raw amino-acid sequence, 80 residues long: Toxin Acra I-2 (80 aa).

Residues 1–22 (MMKLALFSIIVILFSLIGSIHG) form the signal peptide. The LCN-type CS-alpha/beta domain occupies 25–80 (VPGNYPLDSSGNKYPCTVLGDNQSCIDVCKKHGVKYGYCYSFKCWCEFLEDKNVSI). 3 cysteine pairs are disulfide-bonded: cysteine 40–cysteine 63, cysteine 49–cysteine 68, and cysteine 53–cysteine 70.

In terms of tissue distribution, expressed by the venom gland.

Its subcellular location is the secreted. Its function is as follows. Probable neurotoxin that inhibits ion channels. Is toxic to mice. Is about 2.8% of the total protein in the venom. This chain is Toxin Acra I-2, found in Androctonus crassicauda (Arabian fat-tailed scorpion).